Consider the following 184-residue polypeptide: Tumor necrosis factor receptor superfamily member 17 (184 aa).

Over 1–54 (MLQMAGQCSQNEYFDSLLHACIPCQLRCSSNTPPLTCQRYCNASVTNSVKGTNA) the chain is Extracellular. Residues 7–41 (QCSQNEYFDSLLHACIPCQLRCSSNTPPLTCQRYC) form a TNFR-Cys repeat. 3 disulfide bridges follow: cysteine 8–cysteine 21, cysteine 24–cysteine 37, and cysteine 28–cysteine 41. The helical; Signal-anchor for type III membrane protein transmembrane segment at 55-77 (ILWTCLGLSLIISLAVFVLMFLL) threads the bilayer. Over 78–184 (RKINSEPLKD…TEIEKSISAR (107 aa)) the chain is Cytoplasmic.

Associates with TRAF1, TRAF2, TRAF3, TRAF5 and TRAF6. Expressed in mature B-cells, but not in T-cells or monocytes.

The protein resides in the cell membrane. The protein localises to the endomembrane system. Functionally, receptor for TNFSF13B/BLyS/BAFF and TNFSF13/APRIL. Promotes B-cell survival and plays a role in the regulation of humoral immunity. Activates NF-kappa-B and JNK. The chain is Tumor necrosis factor receptor superfamily member 17 (TNFRSF17) from Homo sapiens (Human).